Consider the following 559-residue polypeptide: NXPE family member 3 (559 aa).

The N-terminal stretch at 1-30 (MWINFVKLRLFCCLLAVLMVVVLVVNVTQV) is a signal peptide. N-linked (GlcNAc...) asparagine glycans are attached at residues N26, N237, and N346.

Belongs to the NXPE family.

Its subcellular location is the secreted. The protein is NXPE family member 3 (NXPE3) of Bos taurus (Bovine).